We begin with the raw amino-acid sequence, 130 residues long: Ribonuclease P protein component (130 aa).

This sequence belongs to the RnpA family. As to quaternary structure, consists of a catalytic RNA component (M1 or rnpB) and a protein subunit.

It carries out the reaction Endonucleolytic cleavage of RNA, removing 5'-extranucleotides from tRNA precursor.. Its function is as follows. RNaseP catalyzes the removal of the 5'-leader sequence from pre-tRNA to produce the mature 5'-terminus. It can also cleave other RNA substrates such as 4.5S RNA. The protein component plays an auxiliary but essential role in vivo by binding to the 5'-leader sequence and broadening the substrate specificity of the ribozyme. This Psychrobacter sp. (strain PRwf-1) protein is Ribonuclease P protein component.